Consider the following 352-residue polypeptide: Ion-translocating oxidoreductase complex subunit D (352 aa).

4 helical membrane-spanning segments follow: residues 20-40, 42-62, 69-91, and 123-143; these read IMLL…WFFG, GTLF…AIVL, VASH…SIPP, and PAMI…TSWL. T187 carries the post-translational modification FMN phosphoryl threonine. 5 consecutive transmembrane segments (helical) span residues 215–235, 242–262, 267–287, 301–321, and 322–342; these read LAGV…VFLL, WHIP…GWLF, LASP…FFIL, LIFG…GGYP, and DGVA…DYYT.

It belongs to the NqrB/RnfD family. In terms of assembly, the complex is composed of six subunits: RsxA, RsxB, RsxC, RsxD, RsxE and RsxG. Requires FMN as cofactor.

Its subcellular location is the cell inner membrane. In terms of biological role, part of a membrane-bound complex that couples electron transfer with translocation of ions across the membrane. Required to maintain the reduced state of SoxR. In Salmonella choleraesuis (strain SC-B67), this protein is Ion-translocating oxidoreductase complex subunit D.